The following is a 390-amino-acid chain: Neutrophil cytosol factor 1 (390 aa).

The 122-residue stretch at Thr-4–Leu-125 folds into the PX domain. SH3 domains follow at residues Ile-156–Ser-215 and Tyr-226–Gln-285. The tract at residues Gln-285–Val-390 is disordered. Ser-303 and Ser-304 each carry phosphoserine. A compositionally biased stretch (basic residues) spans His-309–Arg-318. 4 positions are modified to phosphoserine: Ser-320, Ser-328, Ser-345, and Ser-348.

As to quaternary structure, component of the phagocyte NADPH oxidase complex composed of an obligatory core heterodimer formed by the membrane proteins CYBA and CYBB and the cytosolic regulatory subunits NCF1/p47-phox, NCF2/p67-phox, NCF4/p40-phox and the small GTPase RAC1 or RAC2. Part of a cytosolic complex composed at least by NCF1, NCF2 and NCF4. Interacts (via C-terminus) with NCF2 (via the C-terminal SH3 domain). Interacts with NCF4. Interacts with CYBB. Interacts (via the second SH3 domain) with CYBA; interaction is phosphorylation-dependent. Interacts with NOXA1. Interacts with ADAM15. Interacts with TRAF4. Interacts with FASLG. Interacts with PARK7 (via C-terminus); the interaction is enhanced by LPS and modulates NCF1 phosphorylation and membrane translocation. Post-translationally, phosphorylated by PRKCD; phosphorylation induces activation of NCF1, leading to assembly and activation of the NADPH oxidase complex. As to expression, detected in peripheral blood monocytes and neutrophils (at protein level).

Its subcellular location is the cytoplasm. It localises to the cytosol. The protein resides in the membrane. Its function is as follows. Subunit of the phagocyte NADPH oxidase complex that mediates the transfer of electrons from cytosolic NADPH to O2 to produce the superoxide anion (O2(-)). In the activated complex, electrons are first transferred from NADPH to flavin adenine dinucleotide (FAD) and subsequently transferred via two heme molecules to molecular oxygen, producing superoxide through an outer-sphere reaction. Activation of the NADPH oxidase complex is initiated by the assembly of cytosolic subunits of the NADPH oxidase complex with the core NADPH oxidase complex to form a complex at the plasma membrane or phagosomal membrane. This activation process is initiated by phosphorylation dependent binding of the cytosolic NCF1/p47-phox subunit to the C-terminus of CYBA/p22-phox. In Homo sapiens (Human), this protein is Neutrophil cytosol factor 1.